Here is a 131-residue protein sequence, read N- to C-terminus: DCPSDWSSHEEHCYKVFRLFKTWEEAEKFCTQQVNGWHLASIESVEEANFLAELVPKTLIKSKYHVWIGLRDQSERQQCSSHWTDGSAVSYEKVVRFTKCFGLNKDKGYLEWVTLPCEDKNPFICKSWVPH.

3 disulfide bridges follow: Cys-2/Cys-13, Cys-30/Cys-125, and Cys-100/Cys-117. Residues 9–126 (HEEHCYKVFR…CEDKNPFICK (118 aa)) form the C-type lectin domain.

In terms of assembly, heterodimer of subunits alpha and beta; disulfide-linked. Expressed by the venom gland.

The protein localises to the secreted. In terms of biological role, interferes with one step of hemostasis (modulation of platelet aggregation, or coagulation cascade, for example). This Macrovipera lebetinus (Levantine viper) protein is Snaclec macrovipecetin subunit alpha.